The following is a 224-amino-acid chain: Glycerol-3-phosphate acyltransferase (224 aa).

Helical transmembrane passes span 14-34 (INMI…GWLL), 70-90 (YLSI…VLGA), 99-119 (TQWS…YLGF), 129-149 (IGSV…IWGI), 162-182 (LIGV…LPLP), and 185-205 (ISII…LFIF).

This sequence belongs to the PlsY family. As to quaternary structure, probably interacts with PlsX.

It localises to the cell inner membrane. The catalysed reaction is an acyl phosphate + sn-glycerol 3-phosphate = a 1-acyl-sn-glycero-3-phosphate + phosphate. It functions in the pathway lipid metabolism; phospholipid metabolism. Functionally, catalyzes the transfer of an acyl group from acyl-phosphate (acyl-PO(4)) to glycerol-3-phosphate (G3P) to form lysophosphatidic acid (LPA). This enzyme utilizes acyl-phosphate as fatty acyl donor, but not acyl-CoA or acyl-ACP. This Helicobacter hepaticus (strain ATCC 51449 / 3B1) protein is Glycerol-3-phosphate acyltransferase.